We begin with the raw amino-acid sequence, 322 residues long: uncharacterized protein (322 aa).

The signal sequence occupies residues 1–32 (MRDGIGKRAASALFLCGVLVMLAVSSAIVSSA).

This is an uncharacterized protein from Bacillus subtilis (strain 168).